The following is a 419-amino-acid chain: Carboxypeptidase A1 (419 aa).

A signal peptide spans 1–16 (MWGLLIFSVLLGGVLA). The propeptide at 17–110 (KEDFVGHQVL…QEQMFASQGR (94 aa)) is activation peptide. Residues 121–414 (TYHTLEEIYD…LALLTIMEHT (294 aa)) enclose the Peptidase M14 domain. Positions 179 and 182 each coordinate Zn(2+). Substrate-binding positions include 179–182 (HSRE), Arg-237, and 254–255 (NR). The cysteines at positions 248 and 271 are disulfide-linked. His-306 serves as a coordination point for Zn(2+). Substrate is bound by residues 307 to 308 (SY) and Tyr-358. Glu-380 (proton donor/acceptor) is an active-site residue.

Belongs to the peptidase M14 family. Monomer. May form a complex with proelastase 2. It depends on Zn(2+) as a cofactor.

Its subcellular location is the secreted. The catalysed reaction is Release of a C-terminal amino acid, but little or no action with -Asp, -Glu, -Arg, -Lys or -Pro.. The enzyme catalyses leukotriene C4 + H2O = leukotriene F4 + glycine. In terms of biological role, carboxypeptidase that catalyzes the release of a C-terminal amino acid, but has little or no action with -Asp, -Glu, -Arg, -Lys or -Pro. Catalyzes the conversion of leukotriene C4 to leukotriene F4 via the hydrolysis of an amide bond. The chain is Carboxypeptidase A1 (CPA1) from Sus scrofa (Pig).